Reading from the N-terminus, the 316-residue chain is Homoserine kinase (316 aa).

An ATP-binding site is contributed by 97-107 (PPARGLGSSAS).

This sequence belongs to the GHMP kinase family. Homoserine kinase subfamily.

The protein localises to the cytoplasm. The enzyme catalyses L-homoserine + ATP = O-phospho-L-homoserine + ADP + H(+). The protein operates within amino-acid biosynthesis; L-threonine biosynthesis; L-threonine from L-aspartate: step 4/5. Functionally, catalyzes the ATP-dependent phosphorylation of L-homoserine to L-homoserine phosphate. This is Homoserine kinase from Prochlorococcus marinus (strain MIT 9303).